We begin with the raw amino-acid sequence, 405 residues long: L-carnitine CoA-transferase (405 aa).

Residues Lys-97 and Arg-104 each contribute to the CoA site. Asp-169 acts as the Nucleophile in catalysis.

Belongs to the CoA-transferase III family. CaiB subfamily. As to quaternary structure, homodimer.

It localises to the cytoplasm. The catalysed reaction is crotonobetainyl-CoA + (R)-carnitine = crotonobetaine + (R)-carnitinyl-CoA. It catalyses the reaction 4-(trimethylamino)butanoyl-CoA + (R)-carnitine = (R)-carnitinyl-CoA + 4-(trimethylamino)butanoate. The protein operates within amine and polyamine metabolism; carnitine metabolism. In terms of biological role, catalyzes the reversible transfer of the CoA moiety from gamma-butyrobetainyl-CoA to L-carnitine to generate L-carnitinyl-CoA and gamma-butyrobetaine. Is also able to catalyze the reversible transfer of the CoA moiety from gamma-butyrobetainyl-CoA or L-carnitinyl-CoA to crotonobetaine to generate crotonobetainyl-CoA. This Escherichia coli O6:K15:H31 (strain 536 / UPEC) protein is L-carnitine CoA-transferase.